A 155-amino-acid chain; its full sequence is Transcriptional repressor NrdR (155 aa).

The tract at residues 1–24 is disordered; the sequence is MRCPYCGHEDSQVKDSRPTEDGAA. Residues 3–34 fold into a zinc finger; the sequence is CPYCGHEDSQVKDSRPTEDGAAIRRRRQCEDC. Residues 7 to 24 are compositionally biased toward basic and acidic residues; sequence GHEDSQVKDSRPTEDGAA. The 91-residue stretch at 49–139 folds into the ATP-cone domain; sequence VVVIKAGGTR…VYRDFTEARD (91 aa).

It belongs to the NrdR family. The cofactor is Zn(2+).

In terms of biological role, negatively regulates transcription of bacterial ribonucleotide reductase nrd genes and operons by binding to NrdR-boxes. This is Transcriptional repressor NrdR from Sphingopyxis alaskensis (strain DSM 13593 / LMG 18877 / RB2256) (Sphingomonas alaskensis).